Reading from the N-terminus, the 432-residue chain is Meiotically up-regulated gene 134 protein (432 aa).

Belongs to the UPF0300 family.

It localises to the cytoplasm. It is found in the cell cortex. Functionally, has a role in meiosis. The polypeptide is Meiotically up-regulated gene 134 protein (mug134) (Schizosaccharomyces pombe (strain 972 / ATCC 24843) (Fission yeast)).